A 424-amino-acid chain; its full sequence is MKSYFCVTPSGWQETQTRPRIVPKHSEKCSRTYSRPRSSLSDSEGRCVVLPRDGGGRKRKSNGSQGRCSNNPGRPSRKWTEKTIAASRQGFFSKRDNGYWVPKSPEKKYVPKVFPRNMDNKKSFKDVLTSPAKIQIKPTPESILLAQKIQNSTFKSRGKVTLSQFSLPLINRFQEIQLTTHLEPVEESTPFGVNDQRAQHLFCKKVPRKIGRNTVLVCPITGTESHIDAKRGISARIVDSMASVVHTENLPAYERGHVVTKNVSRTKRVCTPVPIIGTFSDRAIRVECDDHTDELASASSVPSIWKPSKKQHAVPISSSNEMGSAVGTKPDWYTPVKTCTHRQYQKVQRVFLDAMNIMRTLRFHTGPQELRETWVKCWLQVHKKNVAFPGWMITPLLSGTVPCEQEFFLPKAGETRGFATVCYA.

The disordered stretch occupies residues 15–78 (TQTRPRIVPK…SNNPGRPSRK (64 aa)). Composition is skewed to polar residues over residues 31–42 (RTYSRPRSSLSD) and 62–73 (NGSQGRCSNNPG).

It belongs to the nepovirus satellite RNA 48 kDa protein family.

This Allium porrum (Leek) protein is Satellite RNA 48 kDa protein.